The primary structure comprises 637 residues: Biosynthetic arginine decarboxylase (637 aa).

Lysine 101 bears the N6-(pyridoxal phosphate)lysine mark. 286-296 is a substrate binding site; the sequence is FDVGGGLAVDY.

The protein belongs to the Orn/Lys/Arg decarboxylase class-II family. SpeA subfamily. It depends on Mg(2+) as a cofactor. Requires pyridoxal 5'-phosphate as cofactor.

It catalyses the reaction L-arginine + H(+) = agmatine + CO2. It functions in the pathway amine and polyamine biosynthesis; agmatine biosynthesis; agmatine from L-arginine: step 1/1. Functionally, catalyzes the biosynthesis of agmatine from arginine. This is Biosynthetic arginine decarboxylase from Shewanella piezotolerans (strain WP3 / JCM 13877).